The following is a 228-amino-acid chain: FCS-Like Zinc finger 12 (228 aa).

An FLZ-type zinc finger spans residues 162–205 (DFLTSCCLCKKKLQGKDIYMYKGDEGFCSKECRSLKIMEDSLKE).

This sequence belongs to the FLZ family. In terms of assembly, interacts with KIN10 and KIN11 via its FLZ-type zinc finger domain. Interacts with KINB1 and KINB2 via its N-terminal part. Forms homodimer and heterodimer with FLZ2 and FLZ10 in vitro.

In terms of biological role, may act as an adapter to facilitate the interaction of SnRK1 complex with effector proteins, conferring tissue- and stimulus-type specific differences in the SnRK1 regulation pathway. In Arabidopsis thaliana (Mouse-ear cress), this protein is FCS-Like Zinc finger 12.